The following is an 87-amino-acid chain: MDMLSAAEQRTLEQRMQKRQVKEFMGAFGGLVEHCFMSCVDDFTSKAISNRESGCINRCVQKWMASQQRISDRFQEHNAQLTAQMNK.

The short motif at 35–59 (CFMSCVDDFTSKAISNRESGCINRC) is the Twin CX3C motif element. Disulfide bonds link Cys-35–Cys-59 and Cys-39–Cys-55.

Belongs to the small Tim family. Heterohexamer; composed of 3 copies of TIM9 and 3 copies of TIM10, named soluble 70 kDa complex. Associates with the TIM22 complex, whose core is composed of TIM22 and TIM54. Interacts with the transmembrane regions of multi-pass transmembrane proteins in transit.

It localises to the mitochondrion inner membrane. Mitochondrial intermembrane chaperone that participates in the import and insertion of multi-pass transmembrane proteins into the mitochondrial inner membrane. Also required for the transfer of beta-barrel precursors from the TOM complex to the sorting and assembly machinery (SAM complex) of the outer membrane. Acts as a chaperone-like protein that protects the hydrophobic precursors from aggregation and guide them through the mitochondrial intermembrane space. This Gibberella zeae (strain ATCC MYA-4620 / CBS 123657 / FGSC 9075 / NRRL 31084 / PH-1) (Wheat head blight fungus) protein is Mitochondrial import inner membrane translocase subunit TIM9 (TIM9).